The following is a 459-amino-acid chain: Bifunctional protein GlmU (459 aa).

The interval 1–230 is pyrophosphorylase; the sequence is MSNRFAVILA…FDETLGVNDR (230 aa). Residues 9 to 12, lysine 23, glutamine 73, and 78 to 79 each bind UDP-N-acetyl-alpha-D-glucosamine; these read LAAG and GT. Aspartate 103 contributes to the Mg(2+) binding site. Residues glycine 140, glutamate 155, asparagine 170, and asparagine 228 each contribute to the UDP-N-acetyl-alpha-D-glucosamine site. Residue asparagine 228 participates in Mg(2+) binding. Residues 231-251 are linker; that stretch reads VALSQAEIIMKNRINRKNMVN. The interval 252 to 459 is N-acetyltransferase; it reads GVTIIDPSNT…VDQLLNKKKS (208 aa). UDP-N-acetyl-alpha-D-glucosamine contacts are provided by arginine 333 and lysine 351. The active-site Proton acceptor is histidine 363. UDP-N-acetyl-alpha-D-glucosamine contacts are provided by tyrosine 366 and asparagine 377. Acetyl-CoA contacts are provided by residues 386-387, alanine 423, and arginine 440; that span reads NY.

This sequence in the N-terminal section; belongs to the N-acetylglucosamine-1-phosphate uridyltransferase family. In the C-terminal section; belongs to the transferase hexapeptide repeat family. In terms of assembly, homotrimer. Mg(2+) serves as cofactor.

Its subcellular location is the cytoplasm. It carries out the reaction alpha-D-glucosamine 1-phosphate + acetyl-CoA = N-acetyl-alpha-D-glucosamine 1-phosphate + CoA + H(+). The catalysed reaction is N-acetyl-alpha-D-glucosamine 1-phosphate + UTP + H(+) = UDP-N-acetyl-alpha-D-glucosamine + diphosphate. The protein operates within nucleotide-sugar biosynthesis; UDP-N-acetyl-alpha-D-glucosamine biosynthesis; N-acetyl-alpha-D-glucosamine 1-phosphate from alpha-D-glucosamine 6-phosphate (route II): step 2/2. It functions in the pathway nucleotide-sugar biosynthesis; UDP-N-acetyl-alpha-D-glucosamine biosynthesis; UDP-N-acetyl-alpha-D-glucosamine from N-acetyl-alpha-D-glucosamine 1-phosphate: step 1/1. Its pathway is bacterial outer membrane biogenesis; LPS lipid A biosynthesis. Catalyzes the last two sequential reactions in the de novo biosynthetic pathway for UDP-N-acetylglucosamine (UDP-GlcNAc). The C-terminal domain catalyzes the transfer of acetyl group from acetyl coenzyme A to glucosamine-1-phosphate (GlcN-1-P) to produce N-acetylglucosamine-1-phosphate (GlcNAc-1-P), which is converted into UDP-GlcNAc by the transfer of uridine 5-monophosphate (from uridine 5-triphosphate), a reaction catalyzed by the N-terminal domain. This Bacillus cereus (strain G9842) protein is Bifunctional protein GlmU.